The following is a 140-amino-acid chain: uncharacterized protein (140 aa).

This is an uncharacterized protein from Archaeoglobus fulgidus (strain ATCC 49558 / DSM 4304 / JCM 9628 / NBRC 100126 / VC-16).